The primary structure comprises 104 residues: L-rhamnose mutarotase (104 aa).

Tyr-18 is a substrate binding site. The Proton donor role is filled by His-22. Substrate is bound by residues Tyr-41 and 76-77 (WW).

This sequence belongs to the rhamnose mutarotase family. In terms of assembly, homodimer.

Its subcellular location is the cytoplasm. It catalyses the reaction alpha-L-rhamnose = beta-L-rhamnose. It functions in the pathway carbohydrate metabolism; L-rhamnose metabolism. Functionally, involved in the anomeric conversion of L-rhamnose. The chain is L-rhamnose mutarotase from Shigella sonnei (strain Ss046).